The chain runs to 305 residues: Epoxyqueuosine reductase (305 aa).

D128 functions as the Proton donor in the catalytic mechanism. Residues 170-202 (LSLTSDTPHAKYCGTCRKCLDICPTKAIVHPFV) form the 4Fe-4S ferredoxin-type domain. Residues C182, C185, C188, C192, C208, C236, C239, and C243 each coordinate [4Fe-4S] cluster.

This sequence belongs to the QueG family. Monomer. Cob(II)alamin is required as a cofactor. Requires [4Fe-4S] cluster as cofactor.

The protein resides in the cytoplasm. It catalyses the reaction epoxyqueuosine(34) in tRNA + AH2 = queuosine(34) in tRNA + A + H2O. Its pathway is tRNA modification; tRNA-queuosine biosynthesis. Its function is as follows. Catalyzes the conversion of epoxyqueuosine (oQ) to queuosine (Q), which is a hypermodified base found in the wobble positions of tRNA(Asp), tRNA(Asn), tRNA(His) and tRNA(Tyr). The polypeptide is Epoxyqueuosine reductase (Atelocyanobacterium thalassa (isolate ALOHA)).